We begin with the raw amino-acid sequence, 375 residues long: Queuine tRNA-ribosyltransferase (375 aa).

Asp-89 (proton acceptor) is an active-site residue. Substrate is bound by residues 89–93 (DSGGF), Asp-143, Gln-187, and Gly-214. An RNA binding region spans residues 245–251 (GVGKPED). The active-site Nucleophile is the Asp-264. The interval 269-273 (TRNAR) is RNA binding; important for wobble base 34 recognition. Residues Cys-302, Cys-304, Cys-307, and His-333 each coordinate Zn(2+).

Belongs to the queuine tRNA-ribosyltransferase family. In terms of assembly, homodimer. Within each dimer, one monomer is responsible for RNA recognition and catalysis, while the other monomer binds to the replacement base PreQ1. The cofactor is Zn(2+).

The catalysed reaction is 7-aminomethyl-7-carbaguanine + guanosine(34) in tRNA = 7-aminomethyl-7-carbaguanosine(34) in tRNA + guanine. It functions in the pathway tRNA modification; tRNA-queuosine biosynthesis. Catalyzes the base-exchange of a guanine (G) residue with the queuine precursor 7-aminomethyl-7-deazaguanine (PreQ1) at position 34 (anticodon wobble position) in tRNAs with GU(N) anticodons (tRNA-Asp, -Asn, -His and -Tyr). Catalysis occurs through a double-displacement mechanism. The nucleophile active site attacks the C1' of nucleotide 34 to detach the guanine base from the RNA, forming a covalent enzyme-RNA intermediate. The proton acceptor active site deprotonates the incoming PreQ1, allowing a nucleophilic attack on the C1' of the ribose to form the product. After dissociation, two additional enzymatic reactions on the tRNA convert PreQ1 to queuine (Q), resulting in the hypermodified nucleoside queuosine (7-(((4,5-cis-dihydroxy-2-cyclopenten-1-yl)amino)methyl)-7-deazaguanosine). The protein is Queuine tRNA-ribosyltransferase of Salmonella agona (strain SL483).